A 357-amino-acid chain; its full sequence is Decapping nuclease RAI1 (357 aa).

A divalent metal cation is bound at residue Glu-157. Positions 189 and 206 each coordinate substrate. Positions 208, 226, and 227 each coordinate a divalent metal cation. Residues Lys-228 and Gln-252 each contribute to the substrate site.

Belongs to the DXO/Dom3Z family. In terms of assembly, interacts with rat1; the interaction is direct, stabilizes rat1 protein structure and stimulates its exoribonuclease activity. The interaction also stimulates rai1 pyrophosphohydrolase activity, probably by recruiting it to mRNA substrates. The cofactor is a divalent metal cation.

The protein resides in the nucleus. The catalysed reaction is a 5'-end NAD(+)-phospho-ribonucleoside in mRNA + H2O = a 5'-end phospho-ribonucleoside in mRNA + NAD(+) + H(+). It carries out the reaction a 5'-end (N(7)-methyl 5'-triphosphoguanosine)-ribonucleoside-ribonucleotide in mRNA + H2O = a (N(7)-methyl 5'-triphosphoguanosine)-nucleoside + a 5'-end phospho-ribonucleoside in mRNA + H(+). It catalyses the reaction a 5'-end triphospho-ribonucleoside in mRNA + H2O = a 5'-end phospho-ribonucleoside in mRNA + diphosphate + H(+). Decapping enzyme for NAD-capped RNAs: specifically hydrolyzes the nicotinamide adenine dinucleotide (NAD) cap from a subset of RNAs by removing the entire NAD moiety from the 5'-end of an NAD-capped RNA. The NAD-cap is present at the 5'-end of some RNAs and snoRNAs. In contrast to the canonical 5'-end N7 methylguanosine (m7G) cap, the NAD cap promotes mRNA decay. Also acts as a non-canonical decapping enzyme that removes the entire cap structure of m7G capped or incompletely capped RNAs. Has decapping activity toward incomplete 5'-end m7G cap mRNAs such as unmethylated 5'-end-capped RNA (cap0), while it has no activity toward 2'-O-ribose methylated m7G cap (cap1). Also possesses RNA 5'-pyrophosphohydrolase activity by hydrolyzing the 5'-end triphosphate to release pyrophosphates. Stimulates exoribonuclease activity of Rat1, allowing it to degrade RNAs with stable secondary structure more effectively. This is Decapping nuclease RAI1 (rai1) from Emericella nidulans (strain FGSC A4 / ATCC 38163 / CBS 112.46 / NRRL 194 / M139) (Aspergillus nidulans).